Consider the following 312-residue polypeptide: MEDKKDALISKTISMLLDNGFAVADISGQFSASFDIIARRNIERYVLKVLYNIDTLKPTTAYQLAKVAKFLRSTATIVGEKAGGGPLEDGVIYYRHGIPISSLDTFRDYINGEKPYIYSGPGGFYVKINGEALREMRMKMSLSIGYLSHYLGVSRRSVSLYENGSSATIDVFLKLQEIIKSDLVDHTDLFKIIPDNFQEEERVDDVYIQMLLDILERIGLDTKPAYRMPFDILARDEEVVSLIASLLSEEADKTKIEIMKKISSVLEDDAFLISKHSTTRENINGCPVINIVDLEKMTSKDELLRMLEKRAR.

The HTH cro/C1-type domain occupies 133-186 (LREMRMKMSLSIGYLSHYLGVSRRSVSLYENGSSATIDVFLKLQEIIKSDLVDH). The segment at residues 144–163 (IGYLSHYLGVSRRSVSLYEN) is a DNA-binding region (H-T-H motif).

The polypeptide is Putative HTH-type transcriptional regulatory protein Ta1363 (Thermoplasma acidophilum (strain ATCC 25905 / DSM 1728 / JCM 9062 / NBRC 15155 / AMRC-C165)).